Here is a 251-residue protein sequence, read N- to C-terminus: Pyrroloquinoline-quinone synthase (251 aa).

This sequence belongs to the PqqC family.

The enzyme catalyses 6-(2-amino-2-carboxyethyl)-7,8-dioxo-1,2,3,4,7,8-hexahydroquinoline-2,4-dicarboxylate + 3 O2 = pyrroloquinoline quinone + 2 H2O2 + 2 H2O + H(+). The protein operates within cofactor biosynthesis; pyrroloquinoline quinone biosynthesis. Ring cyclization and eight-electron oxidation of 3a-(2-amino-2-carboxyethyl)-4,5-dioxo-4,5,6,7,8,9-hexahydroquinoline-7,9-dicarboxylic-acid to PQQ. In Pseudomonas entomophila (strain L48), this protein is Pyrroloquinoline-quinone synthase.